Consider the following 479-residue polypeptide: Adenylate kinase 8 (479 aa).

Adenylate kinase stretches follow at residues 58 to 258 and 269 to 471; these read PRIV…TYVQ and PRVL…SGII. ATP is bound at residue 67-72; the sequence is ASGKTT. Residues 87 to 113 are NMP 1; the sequence is TLENLILNEFSYTATEARRLYLQRKTV. AMP-binding positions include 140 to 143, Gln147, and Arg203; that span reads GIPE. The tract at residues 177 to 206 is LID 1; it reads GKRIDPQTGEIYHTTFDWPPESEIQNRLMV. 278 to 283 provides a ligand contact to ATP; the sequence is GSGKSL. The tract at residues 298–327 is NMP 2; that stretch reads CCGQLLKEAVADRTTFGELIQPFFEKEMAV. AMP-binding positions include 325-327, 354-357, and Gln361; these read MAV and GVPR. The interval 391 to 424 is LID 2; it reads LRRIDPVTGERYHLMYKPPPTMEIQARLLQNPKD. Arg392 contributes to the ATP binding site.

It belongs to the adenylate kinase family. As to quaternary structure, interacts with CFAP45 and CFAP52; CFAP45 and AK8 dimerization may create a cavity at the interface of the dimer that can accommodate AMP. In terms of tissue distribution, expressed in respiratory cells (at protein level).

The protein resides in the cytoplasm. It is found in the cytosol. Its subcellular location is the cytoskeleton. The protein localises to the cilium axoneme. It carries out the reaction AMP + ATP = 2 ADP. It catalyses the reaction a 2'-deoxyribonucleoside 5'-diphosphate + ATP = a 2'-deoxyribonucleoside 5'-triphosphate + ADP. The enzyme catalyses a ribonucleoside 5'-diphosphate + ATP = a ribonucleoside 5'-triphosphate + ADP. Nucleoside monophosphate (NMP) kinase that catalyzes the reversible transfer of the terminal phosphate group between nucleoside triphosphates and monophosphates. Has highest activity toward AMP, and weaker activity toward dAMP, CMP and dCMP. Also displays broad nucleoside diphosphate kinase activity. The protein is Adenylate kinase 8 (AK8) of Homo sapiens (Human).